The sequence spans 184 residues: Peptidyl-tRNA hydrolase (184 aa).

Tyr14 lines the tRNA pocket. Residue His19 is the Proton acceptor of the active site. 3 residues coordinate tRNA: Phe64, Asn66, and Asn112.

The protein belongs to the PTH family. As to quaternary structure, monomer.

It is found in the cytoplasm. It catalyses the reaction an N-acyl-L-alpha-aminoacyl-tRNA + H2O = an N-acyl-L-amino acid + a tRNA + H(+). Hydrolyzes ribosome-free peptidyl-tRNAs (with 1 or more amino acids incorporated), which drop off the ribosome during protein synthesis, or as a result of ribosome stalling. In terms of biological role, catalyzes the release of premature peptidyl moieties from peptidyl-tRNA molecules trapped in stalled 50S ribosomal subunits, and thus maintains levels of free tRNAs and 50S ribosomes. In Listeria innocua serovar 6a (strain ATCC BAA-680 / CLIP 11262), this protein is Peptidyl-tRNA hydrolase.